The sequence spans 312 residues: TATA box-binding protein-like 2 (312 aa).

Residues 65 to 115 are disordered; that stretch reads DELSTQDEPSQVEKESKNEDSGIYTDCPQKESTQADIDTSNSAQNTSQFNL. Residues 75-84 are compositionally biased toward basic and acidic residues; sequence QVEKESKNED. The segment covering 94 to 115 has biased composition (polar residues); sequence KESTQADIDTSNSAQNTSQFNL.

The protein belongs to the TBP family. In terms of tissue distribution, in adults, expressed in the gonads, with expression much higher in the ovary than the testis (at protein level). Shows a small amount of expression in other adult organs, including the brain and kidney. Embryonic expression is mostly ubiquitous except in early gastrula embryos where expression is asymmetric.

It is found in the nucleus. In terms of biological role, TATA box-binding transcription factor. Members of the TBP family are differentially required to regulate transcription and development during early embryogenesis. Commits mesoderm to the hematopoietic lineage during hemopoiesis, acting via mespa. Binds to the mespa promoter. This chain is TATA box-binding protein-like 2, found in Danio rerio (Zebrafish).